We begin with the raw amino-acid sequence, 122 residues long: NADH-quinone oxidoreductase subunit A (122 aa).

3 consecutive transmembrane segments (helical) span residues 10–30, 67–87, and 91–111; these read LIIF…LTAG, FALL…WAVV, and LGLF…IGLI.

Belongs to the complex I subunit 3 family. NDH-1 is composed of 14 different subunits. Subunits NuoA, H, J, K, L, M, N constitute the membrane sector of the complex.

It localises to the cell membrane. It carries out the reaction a quinone + NADH + 5 H(+)(in) = a quinol + NAD(+) + 4 H(+)(out). NDH-1 shuttles electrons from NADH, via FMN and iron-sulfur (Fe-S) centers, to quinones in the respiratory chain. The immediate electron acceptor for the enzyme in this species is believed to be a menaquinone. Couples the redox reaction to proton translocation (for every two electrons transferred, four hydrogen ions are translocated across the cytoplasmic membrane), and thus conserves the redox energy in a proton gradient. This chain is NADH-quinone oxidoreductase subunit A, found in Geobacillus kaustophilus (strain HTA426).